Reading from the N-terminus, the 234-residue chain is Leucyl/phenylalanyl-tRNA--protein transferase (234 aa).

Belongs to the L/F-transferase family.

It is found in the cytoplasm. The enzyme catalyses N-terminal L-lysyl-[protein] + L-leucyl-tRNA(Leu) = N-terminal L-leucyl-L-lysyl-[protein] + tRNA(Leu) + H(+). It catalyses the reaction N-terminal L-arginyl-[protein] + L-leucyl-tRNA(Leu) = N-terminal L-leucyl-L-arginyl-[protein] + tRNA(Leu) + H(+). It carries out the reaction L-phenylalanyl-tRNA(Phe) + an N-terminal L-alpha-aminoacyl-[protein] = an N-terminal L-phenylalanyl-L-alpha-aminoacyl-[protein] + tRNA(Phe). Functionally, functions in the N-end rule pathway of protein degradation where it conjugates Leu, Phe and, less efficiently, Met from aminoacyl-tRNAs to the N-termini of proteins containing an N-terminal arginine or lysine. This chain is Leucyl/phenylalanyl-tRNA--protein transferase, found in Pectobacterium carotovorum subsp. carotovorum (strain PC1).